A 2713-amino-acid chain; its full sequence is Histone-lysine N-methyltransferase 2B (2713 aa).

Over residues 1–11 (MAAAAGGGSCP) the composition is skewed to gly residues. 3 disordered regions span residues 1 to 65 (MAAA…GEDT), 82 to 524 (RLWA…PTVV), and 542 to 783 (VSAR…ARVA). Ala2 is subject to N-acetylalanine. The segment covering 12 to 24 (GPGSARGRFPGRP) has biased composition (low complexity). The Menin-binding motif (MBM) motif lies at 17 to 36 (RGRFPGRPRGSGGGGGRGGR). Composition is skewed to gly residues over residues 25 to 38 (RGSGGGGGRGGRGN) and 49 to 60 (RGGGAAGPGGAE). The segment at residues 37–44 (GNGAERVR) is a DNA-binding region (a.T hook 1). The span at 109–123 (PEEESSDGESEEEEF) shows a compositional bias: acidic residues. The a.T hook 2 DNA-binding region spans 110–117 (EEESSDGE). Ser113, Ser114, and Ser118 each carry phosphoserine. Over residues 144-158 (QRGRAPRGRGRKHKT) the composition is skewed to basic residues. Positions 340–360 (PQRKDGDEPERGSCRKKQEQK) are enriched in basic and acidic residues. Residues 357–365 (QEQKLEEEE) constitute a DNA-binding region (a.T hook 3). A compositionally biased stretch (acidic residues) spans 361–393 (LEEEEEEEEKEGEEKEEKDDNEDNNKQEEEEET). Over residues 394–412 (ERAVAEEEAMLAKEKEEAK) the composition is skewed to basic and acidic residues. The span at 414 to 460 (PSPPLTPPVPSPPPPLPPPSTSPPPPASPLPPPVSPPPPLSPPPYPA) shows a compositional bias: pro residues. Residues 501–517 (GTLSPTPNPSTTTGSPL) show a composition bias toward low complexity. The segment covering 555–566 (RFMDEDPPKPPK) has biased composition (basic and acidic residues). The segment covering 577–605 (ATSPPAPQEPVPVSSPPRVPTPPSTPVPL) has biased composition (pro residues). Residues 606 to 617 (PEKRRSILREPT) show a composition bias toward basic and acidic residues. Pro residues predominate over residues 627 to 645 (LPPPPPAPPPAPSPPPAPA). Low complexity-rich tracts occupy residues 646–657 (TPSRRPLLLRAP), 715–728 (VPVVTSPVKVEVPP), and 738–756 (QQLQLQQPPQALQTQLLPQ). A compositionally biased stretch (pro residues) spans 757–774 (ALPPQQPQAQPPPSPQHT). Lys810 participates in a covalent cross-link: Glycyl lysine isopeptide (Lys-Gly) (interchain with G-Cter in SUMO2). Residues Ser826, Ser849, and Ser866 each carry the phosphoserine modification. 2 disordered regions span residues 831–872 (TEEA…QGPR) and 899–964 (SALP…HHGK). The span at 841–862 (TPDRGCVRSEDESMEAKRDRAS) shows a compositional bias: basic and acidic residues. Residues 912-922 (EDTSSASETES) show a composition bias toward low complexity. Phosphoserine is present on Ser941. Residues 953-964 (TPRRSLPSHHGK) show a composition bias toward basic residues. A CXXC-type zinc finger spans residues 964–1011 (KKMRMARCGHCRGCLRVQDCGSCVNCLDKPKFGGPNTKKQCCVYRKCD). Residues Cys971, Cys974, Cys977, Cys983, Cys986, Cys989, Cys1005, and Cys1010 each coordinate Zn(2+). 2 disordered regions span residues 1032–1076 (LLPW…DSLL) and 1088–1138 (QRPS…LQPV). Ser1037, Ser1040, Ser1098, and Ser1101 each carry phosphoserine. Residue Lys1142 forms a Glycyl lysine isopeptide (Lys-Gly) (interchain with G-Cter in SUMO2) linkage. PHD-type zinc fingers lie at residues 1207–1258 (PMVC…CKFC), 1255–1309 (CKFC…CVRC), and 1341–1402 (GNYC…CAGA). Residues 1410-1510 (ALSGALQGGL…GLLLKLLESA (101 aa)) form the Bromo domain. A disordered region spans residues 1550–1572 (RQQESETPESGQPPGDPSAAFQS). A C2HC pre-PHD-type zinc finger spans residues 1584 to 1624 (PRQCALCLKYGDADSKEAGRLLYIGQNEWTHVNCAIWSAEV). The PHD-type 4 zinc finger occupies 1645-1692 (MRCELCLKPGATVGCCLSSCLSNFHFMCARASYCIFQDDKKVFCQKHT). Positions 1733–1789 (VINVLIGSIRINSLGTLSDLSDCEGRLFPIGYQCSRLYWSTVDARRRCWYRCRILEY) constitute an FYR N-terminal domain. Residues 1808–1821 (QTIVHSPTPSSDTD) are compositionally biased toward polar residues. 5 disordered regions span residues 1808–1973 (QTIV…GPDF), 2056–2104 (QLDG…PPED), 2116–2160 (NLGG…RTFA), 2279–2356 (VSTF…RCPL), and 2382–2408 (YSAGEASSSEEEPPSPEDKENQVPKRV). 2 stretches are compositionally biased toward low complexity: residues 1872 to 1890 (PLGGVSFGPLPSPGSPSSL) and 1923 to 1933 (RRTSSPLRTSP). Phosphoserine is present on residues Ser1926 and Ser1932. Residues 1939 to 1950 (LSTSVTALTPTS) show a composition bias toward polar residues. The span at 2058–2068 (DGVDDGTDSEA) shows a compositional bias: acidic residues. A phosphothreonine mark is found at Thr2064 and Thr2079. Residues 2084–2093 (PGVGRGGVLG) are compositionally biased toward gly residues. Positions 2140–2153 (NGSQPPQSLSTSPA) are enriched in polar residues. A phosphoserine mark is found at Ser2286 and Ser2346. The 82-residue stretch at 2409–2490 (GPHLRFEISS…QRCQHYKFRY (82 aa)) folds into the FYR C-terminal domain. A WDR5 interaction motif (WIN) motif is present at residues 2506 to 2511 (GAARAE). The SET domain occupies 2573–2689 (EAVGVYRSAI…RGEELTYDYK (117 aa)). Residues His2583, Arg2585, Tyr2627, and 2650-2651 (NH) contribute to the S-adenosyl-L-methionine site. The Zn(2+) site is built by Cys2653 and Cys2701. The Post-SET domain occupies 2697-2713 (NKLPCNCGAKRCRRFLN). Position 2702 (Asn2702) interacts with S-adenosyl-L-methionine. The Zn(2+) site is built by Cys2703 and Cys2708.

This sequence belongs to the class V-like SAM-binding methyltransferase superfamily. Histone-lysine methyltransferase family. TRX/MLL subfamily. As to quaternary structure, component of the menin-associated histone methyltransferase complex, at least composed of KMT2B/MLL4, ASH2L, RBBP5, WDR5, DPY30, MEN1; the complex interacts with POLR2A and POLR2B via MEN1. Interacts with NFE2. Interacts with KDM6B. Interacts (via WIN motif) with WDR5. Interacts (via MBM motif) with MEN1.

It is found in the nucleus. The enzyme catalyses L-lysyl(4)-[histone H3] + S-adenosyl-L-methionine = N(6)-methyl-L-lysyl(4)-[histone H3] + S-adenosyl-L-homocysteine + H(+). The catalysed reaction is N(6)-methyl-L-lysyl(4)-[histone H3] + S-adenosyl-L-methionine = N(6),N(6)-dimethyl-L-lysyl(4)-[histone H3] + S-adenosyl-L-homocysteine + H(+). Functionally, histone methyltransferase that catalyzes methyl group transfer from S-adenosyl-L-methionine to the epsilon-amino group of 'Lys-4' of histone H3 (H3K4) via a non-processive mechanism. Part of chromatin remodeling machinery predominantly forms H3K4me1 and H3K4me2 methylation marks at active chromatin sites where transcription and DNA repair take place. Likely plays a redundant role with KMT2C in enriching H3K4me1 marks on primed and active enhancer elements. Plays a central role in beta-globin locus transcription regulation by being recruited by NFE2. Plays an important role in controlling bulk H3K4me during oocyte growth and preimplantation development. Required during the transcriptionally active period of oocyte growth for the establishment and/or maintenance of bulk H3K4 trimethylation (H3K4me3), global transcriptional silencing that preceeds resumption of meiosis, oocyte survival and normal zygotic genome activation. The sequence is that of Histone-lysine N-methyltransferase 2B (Kmt2b) from Mus musculus (Mouse).